Here is a 627-residue protein sequence, read N- to C-terminus: MIRYTVAGHSRRCVVGASKRVGAIKCITVAATKRFISNKPNEVFTKLTNDNDPKRDAFFKYTWGSWLKNDKQEKEKRFTKFSIEGLNRILNDIYIQSNEMAKAPDGKILPPVFNKNLTVSLVNNVVPKNIGKINPNEKVQVTTLSSIHEGKHHRIYKVDTNLNKAFILRIPYPLENENTLSYRIRSEVATMDFADLKLGIKVPKIFCYGVNSLNPVRQPFVLQEFIEGELLMKDWDPLIEDGSSNQKKYDNVIKQVSDFQSKLVSLKLNAFGSIYFNNDLKDGNEKEFVKEDIYDGETNPDLQNRWKIGPSVERCLWRHKSHLDFHKQMKPFLGPWSKKSPMDIIKNTGLLEAENAKTRIAMKEAGSSAELMYPRTLKEQITTYENLAKIAPDLFNVKTKAIPNMQELLSPRLFHPDLDPMNIIVNKEAQEAYLLDFEGACTKPFILQNSPQFIAYDGPKIYDLKEDITDFDKLSEAEKVQYQFMYKRTRNQHQWEKKLNDNNPKLITAVAPPVKLLRSPYIAAVERKTEEEYLLIDESLLQLKEVWDIFAQNDLVNQKKFPLNYSKEDIERHVEDLQKLHEKLISTPFAATQGWIPQDMFDQLLNSGSIVKQENGDYTVKQPEATK.

A mitochondrion-targeting transit peptide spans 1–43; the sequence is MIRYTVAGHSRRCVVGASKRVGAIKCITVAATKRFISNKPNEV.

It belongs to the AIM9 family.

It localises to the mitochondrion. The chain is Altered inheritance of mitochondria protein 9, mitochondrial (AIM9) from Saccharomyces cerevisiae (strain RM11-1a) (Baker's yeast).